The sequence spans 288 residues: Proteasome assembly chaperone 1 (288 aa).

Ala2 is subject to N-acetylalanine. The tract at residues 12-38 (TPCRAGTEEEEEEEDGNRETPEDREVR) is disordered. The residue at position 18 (Thr18) is a Phosphothreonine. The span at 28–38 (NRETPEDREVR) shows a compositional bias: basic and acidic residues. A Phosphothreonine modification is found at Thr54. Ser180 is subject to Phosphoserine. The residue at position 264 (Lys264) is an N6-acetyllysine.

It belongs to the PSMG1 family. In terms of assembly, forms a heterodimer with PSMG2. The PSMG1-PSMG2 heterodimer interacts directly with the PSMA5 and PSMA7 proteasome alpha subunits. In terms of processing, degraded by the proteasome upon completion of 20S proteasome maturation.

The protein localises to the cytoplasm. The protein resides in the endoplasmic reticulum. Its function is as follows. Chaperone protein which promotes assembly of the 20S proteasome as part of a heterodimer with PSMG2. The PSMG1-PSMG2 heterodimer binds to the PSMA5 and PSMA7 proteasome subunits, promotes assembly of the proteasome alpha subunits into the heteroheptameric alpha ring and prevents alpha ring dimerization. In Bos taurus (Bovine), this protein is Proteasome assembly chaperone 1.